The chain runs to 197 residues: Phospholipid hydroperoxide glutathione peroxidase GPX4 (197 aa).

Ser40 carries the phosphoserine modification. Sec73 is an active-site residue. Position 73 (Sec73) is a non-standard amino acid, selenocysteine.

This sequence belongs to the glutathione peroxidase family. As to quaternary structure, monomer. Has a tendency to form higher mass oligomers. Interacts with FUNDC1; this interaction promotes GPX4 recruitment into mitochondria through TOM/TIM complex where it is degraded by mitophagy. Widely expressed with the highest levels in testis, heart, cerebrum, ileum, stomach, liver, jejunum and epididymis. Expressed primarily in testis and sperm midpiece (at protein level). Expressed in brain (at protein level). Expressed in heart, liver and kidney (at protein level). Expressed in retina, especially in inner segments of photoreceptor cells (at protein level). In terms of tissue distribution, highly expressed during embryogenesis. Down-regulated between 14.5 dpc and 17.5 dpc. As to expression, highly expressed during embryogenesis. In contrast to isoform Mitochondrial and isoform Nuclear, which are down-regulated between 14.5 dpc and 17.5 dpc, remains constant. Mainly expressed in sperm. Weakly expressed during embryogenesis. Down-regulated between 14.5 dpc and 17.5 dpc.

It is found in the mitochondrion. Its subcellular location is the cytoplasm. The protein localises to the nucleus. The enzyme catalyses a hydroperoxy polyunsaturated fatty acid + 2 glutathione = a hydroxy polyunsaturated fatty acid + glutathione disulfide + H2O. The catalysed reaction is 2 glutathione + H2O2 = glutathione disulfide + 2 H2O. It carries out the reaction tert-butyl hydroperoxide + 2 glutathione = tert-butanol + glutathione disulfide + H2O. It catalyses the reaction cumene hydroperoxide + 2 glutathione = 2-phenylpropan-2-ol + glutathione disulfide + H2O. The enzyme catalyses (9S)-hydroperoxy-(10E,12Z)-octadecadienoate + 2 glutathione = (9S)-hydroxy-(10E,12Z)-octadecadienoate + glutathione disulfide + H2O. The catalysed reaction is (13S)-hydroperoxy-(9Z,11E)-octadecadienoate + 2 glutathione = (13S)-hydroxy-(9Z,11E)-octadecadienoate + glutathione disulfide + H2O. It carries out the reaction (5S)-hydroperoxy-(6E,8Z,11Z,14Z)-eicosatetraenoate + 2 glutathione = (5S)-hydroxy-(6E,8Z,11Z,14Z)-eicosatetraenoate + glutathione disulfide + H2O. It catalyses the reaction (12R)-hydroperoxy-(5Z,8Z,10E,14Z)-eicosatetraenoate + 2 glutathione = (12R)-hydroxy-(5Z,8Z,10E,14Z)-eicosatetraenoate + glutathione disulfide + H2O. The enzyme catalyses (12S)-hydroperoxy-(5Z,8Z,10E,14Z)-eicosatetraenoate + 2 glutathione = (12S)-hydroxy-(5Z,8Z,10E,14Z)-eicosatetraenoate + glutathione disulfide + H2O. The catalysed reaction is (15S)-hydroperoxy-(5Z,8Z,11Z,13E)-eicosatetraenoate + 2 glutathione = (15S)-hydroxy-(5Z,8Z,11Z,13E)-eicosatetraenoate + glutathione disulfide + H2O. It carries out the reaction (5S)-hydroperoxy-(6E,8Z,11Z,14Z,17Z)-eicosapentaenoate + 2 glutathione = (5S)-hydroxy-(6E,8Z,11Z,14Z,17Z)-eicosapentaenoate + glutathione disulfide + H2O. It catalyses the reaction (12S)-hydroperoxy-(5Z,8Z,10E,14Z,17Z)-eicosapentaenoate + 2 glutathione = (12S)-hydroxy-(5Z,8Z,10E,14Z,17Z)-eicosapentaenoate + glutathione disulfide + H2O. The enzyme catalyses (15S)-hydroperoxy-(5Z,8Z,11Z,13E,17Z)-eicosapentaenoate + 2 glutathione = (15S)-hydroxy-(5Z,8Z,11Z,13E,17Z)-eicosapentaenoate + glutathione disulfide + H2O. The catalysed reaction is (15S)-hydroperoxy-(11Z,13E)-eicosadienoate + 2 glutathione = (15S)-hydroxy-(11Z,13E)-eicosadienoate + glutathione disulfide + H2O. It carries out the reaction (17S)-hydroperoxy-(4Z,7Z,10Z,13Z,15E,19Z)-docosahexaenoate + 2 glutathione = (17S)-hydroxy-(4Z,7Z,10Z,13Z,15E,19Z)-docosahexaenoate + glutathione disulfide + H2O. It catalyses the reaction a hydroperoxy-1,2-diacyl-glycero-3-phosphocholine + 2 glutathione = a hydroxy-1,2-diacyl-glycero-3-phosphocholine + glutathione disulfide + H2O. Functionally, essential antioxidant peroxidase that directly reduces phospholipid hydroperoxide even if they are incorporated in membranes and lipoproteins. Can also reduce fatty acid hydroperoxide, cholesterol hydroperoxide and thymine hydroperoxide. Plays a key role in protecting cells from oxidative damage by preventing membrane lipid peroxidation. Required to prevent cells from ferroptosis, a non-apoptotic cell death resulting from an iron-dependent accumulation of lipid reactive oxygen species. The presence of selenocysteine (Sec) versus Cys at the active site is essential for life: it provides resistance to overoxidation and prevents cells against ferroptosis. The presence of Sec at the active site is also essential for the survival of a specific type of parvalbumin-positive interneurons, thereby preventing against fatal epileptic seizures. May be required to protect cells from the toxicity of ingested lipid hydroperoxides. Required for normal sperm development and male fertility. Essential for maturation and survival of photoreceptor cells. Plays a role in a primary T-cell response to viral and parasitic infection by protecting T-cells from ferroptosis and by supporting T-cell expansion. Plays a role of glutathione peroxidase in platelets in the arachidonic acid metabolism. Reduces hydroperoxy ester lipids formed by a 15-lipoxygenase that may play a role as down-regulator of the cellular 15-lipoxygenase pathway. Can also reduce small soluble hydroperoxides such as H2O2 and tert-butyl hydroperoxide. Its function is as follows. Specifically able to suppress the production of leukotriene and prostaglandin in response to several stimuli by reducing fatty acid hydroperoxide. In terms of biological role, specifically required to prevent mitochondrial cell death by mediating reduction of cardiolipin hydroperoxide. Also required for normal sperm development and male fertility. Required for male fertility by stabilizing the condensed chromatin in sperm nuclei. This Mus musculus (Mouse) protein is Phospholipid hydroperoxide glutathione peroxidase GPX4.